Consider the following 287-residue polypeptide: 4-hydroxybenzoate octaprenyltransferase (287 aa).

8 helical membrane-spanning segments follow: residues 19 to 39 (PIGS…AADG), 43 to 63 (LHVL…GCVI), 94 to 116 (LALA…PLVI), 135 to 155 (FFAI…PMGF), 160 to 180 (GEVP…AVAY), 207 to 227 (FDVA…GWVG), 234 to 254 (ALYF…YTLI), and 269 to 286 (NNWL…DYLI).

Belongs to the UbiA prenyltransferase family. Mg(2+) serves as cofactor.

The protein localises to the cell inner membrane. It catalyses the reaction all-trans-octaprenyl diphosphate + 4-hydroxybenzoate = 4-hydroxy-3-(all-trans-octaprenyl)benzoate + diphosphate. It functions in the pathway cofactor biosynthesis; ubiquinone biosynthesis. Functionally, catalyzes the prenylation of para-hydroxybenzoate (PHB) with an all-trans polyprenyl group. Mediates the second step in the final reaction sequence of ubiquinone-8 (UQ-8) biosynthesis, which is the condensation of the polyisoprenoid side chain with PHB, generating the first membrane-bound Q intermediate 3-octaprenyl-4-hydroxybenzoate. The sequence is that of 4-hydroxybenzoate octaprenyltransferase from Azoarcus sp. (strain BH72).